The following is a 307-amino-acid chain: Acetaldehyde dehydrogenase (307 aa).

The Acyl-thioester intermediate role is filled by Cys131. Residues 162–170 (SIGPGTRKN) and Asn273 contribute to the NAD(+) site.

The protein belongs to the acetaldehyde dehydrogenase family.

The enzyme catalyses acetaldehyde + NAD(+) + CoA = acetyl-CoA + NADH + H(+). This Stutzerimonas stutzeri (Pseudomonas stutzeri) protein is Acetaldehyde dehydrogenase (nahO).